The following is a 504-amino-acid chain: Bacterial leucyl aminopeptidase (504 aa).

Positions 1-21 (MKYTKTLLAMVLSATFCQAYA) are cleaved as a signal peptide. A propeptide spanning residues 22-106 (EDKVWISIGA…AMPTTLASFV (85 aa)) is cleaved from the precursor. Residues His-203, Asp-223, Glu-258, and Asp-285 each coordinate Zn(2+). An intrachain disulfide couples Cys-329 to Cys-333. Residue His-362 coordinates Zn(2+). Residues 406 to 504 (LEDGVPVTDL…SGASLKASTF (99 aa)) constitute a propeptide, removed in mature form.

The protein belongs to the peptidase M28 family. M28E subfamily. Requires Zn(2+) as cofactor.

It is found in the secreted. It carries out the reaction Release of an N-terminal amino acid, preferentially leucine, but not glutamic or aspartic acids.. This chain is Bacterial leucyl aminopeptidase, found in Vibrio proteolyticus (Aeromonas proteolytica).